The sequence spans 239 residues: 1-(5-phosphoribosyl)-5-[(5-phosphoribosylamino)methylideneamino] imidazole-4-carboxamide isomerase (239 aa).

Asp8 (proton acceptor) is an active-site residue. Asp129 functions as the Proton donor in the catalytic mechanism.

Belongs to the HisA/HisF family.

It localises to the cytoplasm. The catalysed reaction is 1-(5-phospho-beta-D-ribosyl)-5-[(5-phospho-beta-D-ribosylamino)methylideneamino]imidazole-4-carboxamide = 5-[(5-phospho-1-deoxy-D-ribulos-1-ylimino)methylamino]-1-(5-phospho-beta-D-ribosyl)imidazole-4-carboxamide. Its pathway is amino-acid biosynthesis; L-histidine biosynthesis; L-histidine from 5-phospho-alpha-D-ribose 1-diphosphate: step 4/9. In Bacillus cereus (strain AH820), this protein is 1-(5-phosphoribosyl)-5-[(5-phosphoribosylamino)methylideneamino] imidazole-4-carboxamide isomerase.